The primary structure comprises 397 residues: Cytochrome b (397 aa).

The next 4 helical transmembrane spans lie at 38–58 (FGSL…FLAM), 82–104 (WLLR…LHIF), 119–139 (VWCL…IGYV), and 185–205 (FFSL…LHLA). Positions 88 and 102 each coordinate heme b. His-189 and His-203 together coordinate heme b. His-208 is a binding site for a ubiquinone. Helical transmembrane passes span 231-251 (FYVK…IWIF), 295-315 (AGGV…PFFK), 327-347 (IYQG…WIGC), and 354-373 (FVTI…AITP).

The protein belongs to the cytochrome b family. In terms of assembly, the main subunits of complex b-c1 are: cytochrome b, cytochrome c1 and the Rieske protein. Heme b serves as cofactor.

The protein localises to the mitochondrion inner membrane. Its function is as follows. Component of the ubiquinol-cytochrome c reductase complex (complex III or cytochrome b-c1 complex) that is part of the mitochondrial respiratory chain. The b-c1 complex mediates electron transfer from ubiquinol to cytochrome c. Contributes to the generation of a proton gradient across the mitochondrial membrane that is then used for ATP synthesis. The chain is Cytochrome b (MT-CYB) from Oryza sativa subsp. japonica (Rice).